Reading from the N-terminus, the 214-residue chain is 3,4-dihydroxy-2-butanone 4-phosphate synthase (214 aa).

D-ribulose 5-phosphate-binding positions include 37–38 (RE), Asp42, 150–154 (RRGHT), and Glu174. Residue Glu38 participates in Mg(2+) binding. His153 contributes to the Mg(2+) binding site.

It belongs to the DHBP synthase family. Homodimer. Mg(2+) is required as a cofactor. Requires Mn(2+) as cofactor.

The catalysed reaction is D-ribulose 5-phosphate = (2S)-2-hydroxy-3-oxobutyl phosphate + formate + H(+). It functions in the pathway cofactor biosynthesis; riboflavin biosynthesis; 2-hydroxy-3-oxobutyl phosphate from D-ribulose 5-phosphate: step 1/1. Functionally, catalyzes the conversion of D-ribulose 5-phosphate to formate and 3,4-dihydroxy-2-butanone 4-phosphate. In Pasteurella multocida (strain Pm70), this protein is 3,4-dihydroxy-2-butanone 4-phosphate synthase.